Consider the following 499-residue polypeptide: Proline--tRNA ligase (499 aa).

The protein belongs to the class-II aminoacyl-tRNA synthetase family. ProS type 3 subfamily. As to quaternary structure, homodimer.

It is found in the cytoplasm. It carries out the reaction tRNA(Pro) + L-proline + ATP = L-prolyl-tRNA(Pro) + AMP + diphosphate. Its function is as follows. Catalyzes the attachment of proline to tRNA(Pro) in a two-step reaction: proline is first activated by ATP to form Pro-AMP and then transferred to the acceptor end of tRNA(Pro). The sequence is that of Proline--tRNA ligase from Bdellovibrio bacteriovorus (strain ATCC 15356 / DSM 50701 / NCIMB 9529 / HD100).